The following is a 224-amino-acid chain: uncharacterized protein (224 aa).

A run of 6 helical transmembrane segments spans residues 25–45 (MMLALAIITSLISEFISIPFF), 54–74 (ISVVFLVACAFFVSLGWSLTI), 91–111 (IGVLTVTLANLSTILFTRLYF), 119–139 (FCWIFVFLFTTLSNALLLTTL), 142–162 (ILITPLFWYYFGYVQTPNFLI), and 174–194 (HFFFFGINNYWLGIFCLYSFF).

It is found in the cell membrane. This is an uncharacterized protein from Mycoplasma genitalium (strain ATCC 33530 / DSM 19775 / NCTC 10195 / G37) (Mycoplasmoides genitalium).